We begin with the raw amino-acid sequence, 547 residues long: Heme-binding protein A (547 aa).

A signal peptide spans 1-18 (MKLKATLTLAAATLVLAA). The N-palmitoyl cysteine moiety is linked to residue C19. C19 is lipidated: S-diacylglycerol cysteine.

The protein belongs to the bacterial solute-binding protein 5 family.

Its subcellular location is the cell inner membrane. In terms of biological role, important role in heme acquisition or metabolism. This Haemophilus influenzae (strain ATCC 51907 / DSM 11121 / KW20 / Rd) protein is Heme-binding protein A (hbpA).